The primary structure comprises 467 residues: MLGIWIVAFLFFGTSRGKEVCYERLGCFKDGLPWTRTFSTELVGLPWSPEKINTRFLLYTIHNPNAYQEISAVNSSTIQASYFGTDKITRINIAGWKTDGKWQRDMCNVLLQLEDINCINLDWINGSREYIHAVNNLRVVGAEVAYFIDVLMKKFEYSPSKVHLIGHSLGAHLAGEAGSRIPGLGRITGLDPAGPFFHNTPKEVRLDPSDANFVDVIHTNAARILFELGVGTIDACGHLDFYPNGGKHMPGCEDLITPLLKFNFNAYKKEMASFFDCNHARSYQFYAESILNPDAFIAYPCRSYTSFKAGNCFFCSKEGCPTMGHFADRFHFKNMKTNGSHYFLNTGSLSPFARWRHKLSVKLSGSEVTQGTVFLRVGGAVRKTGEFAIVSGKLEPGMTYTKLIDADVNVGNITSVQFIWKKHLFEDSQNKLGAEMVINTSGKYGYKSTFCSQDIMGPNILQNLKPC.

A signal peptide spans 1 to 17; sequence MLGIWIVAFLFFGTSRG. A disulfide bridge links C21 with C27. N74 is a glycosylation site (N-linked (GlcNAc...) asparagine). C107 and C118 form a disulfide bridge. N125 carries an N-linked (GlcNAc...) asparagine glycan. The active-site Nucleophile is S168. D191 serves as the catalytic Charge relay system. Cysteines 252 and 277 form a disulfide. The active-site Charge relay system is the H279. 3 disulfide bridges follow: C301-C312, C315-C320, and C451-C467. The 113-residue stretch at 355 to 467 folds into the PLAT domain; sequence WRHKLSVKLS…PNILQNLKPC (113 aa).

This sequence belongs to the AB hydrolase superfamily. Lipase family. In terms of tissue distribution, overexpressed in hepatocellular carcinoma.

Its subcellular location is the secreted. The enzyme catalyses a triacylglycerol + H2O = a diacylglycerol + a fatty acid + H(+). This Homo sapiens (Human) protein is Pancreatic lipase-related protein 3 (PNLIPRP3).